The following is a 363-amino-acid chain: RNA polymerase II holoenzyme cyclin-like subunit (363 aa).

The Cyclin N-terminal domain occupies 53–143; that stretch reads YQMLRLAKNL…IGECEFWLIS (91 aa). The segment at 252 to 312 is disordered; it reads TPGGSGSPAM…SPQKEKSKLQ (61 aa). Residues 265–276 show a composition bias toward polar residues; that stretch reads IQQNPPNQAYQL. The segment covering 277 to 298 has biased composition (low complexity); the sequence is TPQQQEMFRQQQMQQQNRQPET. Basic and acidic residues predominate over residues 299–310; the sequence is QAKDSPQKEKSK.

Belongs to the cyclin family. Cyclin C subfamily. Component of the SRB8-11 complex, a regulatory module of the Mediator complex.

The protein resides in the nucleus. Its function is as follows. Component of the SRB8-11 complex. The SRB8-11 complex is a regulatory module of the Mediator complex which is itself involved in regulation of basal and activated RNA polymerase II-dependent transcription. The SRB8-11 complex may be involved in the transcriptional repression of a subset of genes regulated by Mediator. It may inhibit the association of the Mediator complex with RNA polymerase II to form the holoenzyme complex. The SRB8-11 complex phosphorylates the C-terminal domain (CTD) of the largest subunit of RNA polymerase II. The polypeptide is RNA polymerase II holoenzyme cyclin-like subunit (SSN8) (Pyricularia oryzae (strain 70-15 / ATCC MYA-4617 / FGSC 8958) (Rice blast fungus)).